We begin with the raw amino-acid sequence, 198 residues long: Linker for activation of T-cells family member 2 (198 aa).

The Extracellular segment spans residues 1 to 4 (MAQP). A helical; Signal-anchor for type III membrane protein membrane pass occupies residues 5–24 (ELLWAAAGLMLLGVAVSACV). 2 S-palmitoyl cysteine lipidation sites follow: Cys-23 and Cys-26. The Cytoplasmic portion of the chain corresponds to 25–198 (RCQLYATKRG…PTIDAVVLSK (174 aa)). Phosphotyrosine occurs at positions 136, 155, and 184.

As to quaternary structure, when phosphorylated, interacts with GRB2. In terms of processing, phosphorylated on tyrosines following cross-linking of BCR; which induces the recruitment of GRB2.

The protein resides in the cell membrane. Its function is as follows. Involved in BCR (B-cell antigen receptor)-mediated signaling in B-cells. May also be involved in FCER1 (high affinity immunoglobulin epsilon receptor)-mediated signaling in mast cells and FCGR1 (high affinity immunoglobulin gamma Fc receptor I)-mediated signaling in myeloid cells. Couples activation of these receptors and their associated kinases with distal intracellular events such as calcium mobilization through the recruitment of GRB2. This chain is Linker for activation of T-cells family member 2 (LAT2), found in Gallus gallus (Chicken).